Here is a 296-residue protein sequence, read N- to C-terminus: Methylsterol monooxygenase erg25B (296 aa).

The next 3 membrane-spanning stretches (helical) occupy residues 50-70 (IMSFVMHEIVYFGRSVPWILI), 98-118 (FVLLSHFTVELPQIWLFHPMA), and 125-145 (TSVPFPSVWTMMYQIAIFFVL). The Fatty acid hydroxylase domain occupies 140 to 276 (AIFFVLEDTW…FRWWDYLLDT (137 aa)). A Histidine box-1 motif is present at residues 154-158 (HRALH). The Histidine box-2 motif lies at 167–171 (HKIHH). A helical transmembrane segment spans residues 201 to 221 (ILWCALTGDLHIFTMYVWIVL). The Histidine box-3 signature appears at 251–257 (HHDLHHE).

Belongs to the sterol desaturase family. Fe cation serves as cofactor.

It localises to the endoplasmic reticulum membrane. Its pathway is steroid metabolism; ergosterol biosynthesis. Functionally, sterol-C4-methyl oxidase; part of the third module of ergosterol biosynthesis pathway that includes the late steps of the pathway. Erg25B is a catalytic component of the C-4 demethylation complex that catalyzes the conversion of 4,4-dimethylfecosterol into fecosterol via 4-methylfecosterol. The third module or late pathway involves the ergosterol synthesis itself through consecutive reactions that mainly occur in the endoplasmic reticulum (ER) membrane. Firstly, the squalene synthase erg9 catalyzes the condensation of 2 farnesyl pyrophosphate moieties to form squalene, which is the precursor of all steroids. Squalene synthase is crucial for balancing the incorporation of farnesyl diphosphate (FPP) into sterol and nonsterol isoprene synthesis. Secondly, squalene is converted into lanosterol by the consecutive action of the squalene epoxidase erg1 and the lanosterol synthase erg7. Then, the delta(24)-sterol C-methyltransferase erg6 methylates lanosterol at C-24 to produce eburicol. Eburicol is the substrate of the sterol 14-alpha demethylase encoded by cyp51A and cyp51B, to yield 4,4,24-trimethyl ergosta-8,14,24(28)-trienol. The C-14 reductase erg24 then reduces the C14=C15 double bond which leads to 4,4-dimethylfecosterol. A sequence of further demethylations at C-4, involving the C-4 demethylation complex containing the C-4 methylsterol oxidases erg25A or erg25B, the sterol-4-alpha-carboxylate 3-dehydrogenase erg26 and the 3-keto-steroid reductase erg27, leads to the production of fecosterol via 4-methylfecosterol. The C-8 sterol isomerase erg2 then catalyzes the reaction which results in unsaturation at C-7 in the B ring of sterols and thus converts fecosterol to episterol. The sterol-C5-desaturase erg3B then catalyzes the introduction of a C-5 double bond in the B ring to produce 5-dehydroepisterol. The 2 other sterol-C5-desaturases, erg3A and erg3C, seem to be less important in ergosterol biosynthesis. The C-22 sterol desaturase erg5 further converts 5-dehydroepisterol into ergosta-5,7,22,24(28)-tetraen-3beta-ol by forming the C-22(23) double bond in the sterol side chain. Finally, ergosta-5,7,22,24(28)-tetraen-3beta-ol is substrate of the C-24(28) sterol reductases erg4A and erg4B to produce ergosterol. Possible alternative sterol biosynthetic pathways might exist from fecosterol to ergosterol, depending on the activities of the erg3 isoforms. This chain is Methylsterol monooxygenase erg25B, found in Aspergillus fumigatus (strain ATCC MYA-4609 / CBS 101355 / FGSC A1100 / Af293) (Neosartorya fumigata).